Reading from the N-terminus, the 263-residue chain is UPF0739 protein C1orf74 homolog (263 aa).

This sequence belongs to the UPF0739 family.

The chain is UPF0739 protein C1orf74 homolog from Xenopus tropicalis (Western clawed frog).